The following is a 356-amino-acid chain: Histidinol-phosphate aminotransferase (356 aa).

Lysine 214 carries the N6-(pyridoxal phosphate)lysine modification.

It belongs to the class-II pyridoxal-phosphate-dependent aminotransferase family. Histidinol-phosphate aminotransferase subfamily. As to quaternary structure, homodimer. Pyridoxal 5'-phosphate serves as cofactor.

It carries out the reaction L-histidinol phosphate + 2-oxoglutarate = 3-(imidazol-4-yl)-2-oxopropyl phosphate + L-glutamate. It functions in the pathway amino-acid biosynthesis; L-histidine biosynthesis; L-histidine from 5-phospho-alpha-D-ribose 1-diphosphate: step 7/9. This chain is Histidinol-phosphate aminotransferase, found in Escherichia coli O9:H4 (strain HS).